Consider the following 545-residue polypeptide: RAN GTPase-activating protein 2 (545 aa).

The WPP stretch occupies residues 1–116 (MADILDSRPH…VAARELISED (116 aa)). LRR repeat units follow at residues 213 to 236 (GSIL…AFGA), 241 to 264 (LSSL…AVSE), 269 to 296 (TENL…VVKR), 325 to 348 (CTHM…SLSK), 353 to 380 (FKHM…ALKE), 382 to 405 (ASPI…AIAA), 410 to 433 (KQDL…QIAN), 439 to 462 (HSKL…ALAH), and 467 to 494 (KEAF…IFKK). Residues 496 to 545 (PELLGALDENDPDGEEDDDDEEDEEDEENEGNGNGELESKLKNLEVNQED) are disordered. Residues 503-525 (DENDPDGEEDDDDEEDEEDEENE) show a composition bias toward acidic residues.

It belongs to the RNA1 family. In terms of assembly, homodimer. Interacts with WIP1 and WIP2 through its WPP domain. Component of Ran complexes at least composed of WIT1 or WIT2, RANGAP1 or RANGAP2, and WIP1 or WIP2 or WIP3. Interacts with WIT1.

The protein resides in the cytoplasm. The protein localises to the nucleus membrane. It localises to the cytoskeleton. Its subcellular location is the spindle. It is found in the phragmoplast. Functionally, GTPase activator for the nuclear Ras-related regulatory protein Ran, converting it to the putatively inactive GDP-bound state. This Arabidopsis thaliana (Mouse-ear cress) protein is RAN GTPase-activating protein 2 (RANGAP2).